We begin with the raw amino-acid sequence, 151 residues long: UPF0178 protein CPS_3584 (151 aa).

This sequence belongs to the UPF0178 family.

The chain is UPF0178 protein CPS_3584 from Colwellia psychrerythraea (strain 34H / ATCC BAA-681) (Vibrio psychroerythus).